Consider the following 308-residue polypeptide: Aspartate carbamoyltransferase catalytic subunit (308 aa).

Arg55 and Thr56 together coordinate carbamoyl phosphate. Lys84 contacts L-aspartate. Positions 105, 133, and 136 each coordinate carbamoyl phosphate. L-aspartate is bound by residues Arg167 and Arg228. The carbamoyl phosphate site is built by Leu267 and Pro268.

This sequence belongs to the aspartate/ornithine carbamoyltransferase superfamily. ATCase family. Heterooligomer of catalytic and regulatory chains.

It catalyses the reaction carbamoyl phosphate + L-aspartate = N-carbamoyl-L-aspartate + phosphate + H(+). Its pathway is pyrimidine metabolism; UMP biosynthesis via de novo pathway; (S)-dihydroorotate from bicarbonate: step 2/3. Its function is as follows. Catalyzes the condensation of carbamoyl phosphate and aspartate to form carbamoyl aspartate and inorganic phosphate, the committed step in the de novo pyrimidine nucleotide biosynthesis pathway. The protein is Aspartate carbamoyltransferase catalytic subunit of Methanocella arvoryzae (strain DSM 22066 / NBRC 105507 / MRE50).